We begin with the raw amino-acid sequence, 203 residues long: A-type ATP synthase subunit E (203 aa).

Belongs to the V-ATPase E subunit family. Has multiple subunits with at least A(3), B(3), C, D, E, F, H, I and proteolipid K(x).

It localises to the cell membrane. Functionally, component of the A-type ATP synthase that produces ATP from ADP in the presence of a proton gradient across the membrane. The sequence is that of A-type ATP synthase subunit E from Thermococcus sibiricus (strain DSM 12597 / MM 739).